Reading from the N-terminus, the 50-residue chain is KFCERPSGTWAGVCGNNGKCKDQCIRLEKAKHGSCKYKFPAHRCVCYYEC.

Intrachain disulfides connect cysteine 3–cysteine 50, cysteine 14–cysteine 35, cysteine 20–cysteine 44, and cysteine 24–cysteine 46.

In terms of tissue distribution, detected in seeds (at protein level).

The protein resides in the secreted. In terms of biological role, antimicrobial peptide with antifungal activity. This is Defensin D4 from Nigella sativa (Black cumin).